The primary structure comprises 679 residues: Dihydroxyacetone phosphate acyltransferase (679 aa).

Residue Ser-11 is modified to Phosphoserine. The HXXXXD motif signature appears at 161-166 (HRSYID). Lys-642 is subject to N6-acetyllysine.

This sequence belongs to the GPAT/DAPAT family. As to quaternary structure, part of a heterotrimeric complex composed of GNPAT, AGPS and a modified form of GNPAT.

It localises to the peroxisome membrane. It catalyses the reaction dihydroxyacetone phosphate + an acyl-CoA = a 1-acylglycerone 3-phosphate + CoA. The catalysed reaction is dihydroxyacetone phosphate + hexadecanoyl-CoA = 1-hexadecanoylglycerone 3-phosphate + CoA. The protein operates within membrane lipid metabolism; glycerophospholipid metabolism. Its function is as follows. Dihydroxyacetonephosphate acyltransferase catalyzing the first step in the biosynthesis of plasmalogens, a subset of phospholipids that differ from other glycerolipids by having an alkyl chain attached through a vinyl ether linkage at the sn-1 position of the glycerol backbone, and which unique physical properties have an impact on various aspects of cell signaling and membrane biology. The chain is Dihydroxyacetone phosphate acyltransferase from Oryctolagus cuniculus (Rabbit).